An 831-amino-acid chain; its full sequence is Phenylalanine--tRNA ligase beta subunit (831 aa).

Residues 42–157 (ADISGPIVVG…GFAEPGTKAD (116 aa)) enclose the tRNA-binding domain. Residues 408-483 (VPREPIVVRA…RNEGYENIPA (76 aa)) form the B5 domain. 4 residues coordinate Mg(2+): Asp461, Asp467, Glu470, and Glu471. One can recognise an FDX-ACB domain in the interval 737-830 (STYPVATQDV…AAERTGAVLR (94 aa)).

This sequence belongs to the phenylalanyl-tRNA synthetase beta subunit family. Type 1 subfamily. As to quaternary structure, tetramer of two alpha and two beta subunits. Requires Mg(2+) as cofactor.

It localises to the cytoplasm. It catalyses the reaction tRNA(Phe) + L-phenylalanine + ATP = L-phenylalanyl-tRNA(Phe) + AMP + diphosphate + H(+). This is Phenylalanine--tRNA ligase beta subunit from Thermobifida fusca (strain YX).